Consider the following 332-residue polypeptide: dTDP-3,4-didehydro-2,6-dideoxy-alpha-D-glucose 3-reductase (332 aa).

12 to 18 serves as a coordination point for NADP(+); the sequence is CASFAWR. Arg19 is a substrate binding site. Residues 37–38, Tyr58, Leu74, and His79 contribute to the NADP(+) site; that span reads SR. The active-site Proton donor is Lys97. NADP(+)-binding residues include Arg165 and Asp177. The substrate site is built by Tyr235 and Thr255.

It belongs to the Gfo/Idh/MocA family. Monomer.

The catalysed reaction is dTDP-4-dehydro-2,6-dideoxy-alpha-D-glucose + NADP(+) = dTDP-3,4-didehydro-2,6-dideoxy-alpha-D-glucose + NADPH + H(+). Involved in the biosynthesis of forosamine ((4-dimethylamino)-2,3,4,6-tetradeoxy-alpha-D-threo-hexopyranose), a highly deoxygenated sugar component of several bioactive natural products such as the insecticidal spinosyns A and D. Catalyzes the reduction of the C-3 keto moiety of dTDP-3,4-diketo-2,6-dideoxy-alpha-D-glucose to yield dTDP-4-keto-2,6-dideoxy-alpha-D-glucose. NADPH is the better reductant, however NADH can also be used. This is dTDP-3,4-didehydro-2,6-dideoxy-alpha-D-glucose 3-reductase from Saccharopolyspora spinosa.